A 151-amino-acid chain; its full sequence is Cytochrome c-type biogenesis protein CcmE (151 aa).

Residues 1–8 are Cytoplasmic-facing; the sequence is MNPLRRKR. A helical; Signal-anchor for type II membrane protein transmembrane segment spans residues 9–29; it reads LLIILAILVGVGIAVGLALSA. Residues 30–151 lie on the Periplasmic side of the membrane; the sequence is LQQNINLFYT…QSAPTPAKEG (122 aa). His124 and Tyr128 together coordinate heme.

This sequence belongs to the CcmE/CycJ family.

Its subcellular location is the cell inner membrane. Its function is as follows. Heme chaperone required for the biogenesis of c-type cytochromes. Transiently binds heme delivered by CcmC and transfers the heme to apo-cytochromes in a process facilitated by CcmF and CcmH. In Pseudomonas fluorescens (strain SBW25), this protein is Cytochrome c-type biogenesis protein CcmE.